Here is a 227-residue protein sequence, read N- to C-terminus: MPEINTSHLDEKQVQLLAEMCILIDENDNKIGADTKKNCHLNENIDKGLLHRAFSVFLFNTENKLLLQQRSDAKITFPGCFTNSCCSHPLSNPGELEENNAIGVKRAAKRRLKAELGIPLEEVDLNEMDYLTRIYYKAQSDGIWGEHEVDYILFLRKNVTLNPDPNEIKSYCYVSKEEVREILKKAASGEIKLTPWFKIIADTFLFKWWDNLNHLSPFVDHEKIHRL.

Lys36 provides a ligand contact to substrate. Residues His40 and His51 each coordinate Mg(2+). The Nudix hydrolase domain occupies Leu49–Ile199. Substrate contacts are provided by Arg70 and Lys74. Cys86 is an active-site residue. Ser87 serves as a coordination point for substrate. Mg(2+) is bound by residues Glu146 and Glu148. The active site involves Glu148. Lys176 is subject to N6-acetyllysine. Residues His225–Leu227 carry the Microbody targeting signal motif.

It belongs to the IPP isomerase type 1 family. As to quaternary structure, monomer. It depends on Mg(2+) as a cofactor.

It is found in the peroxisome. It catalyses the reaction isopentenyl diphosphate = dimethylallyl diphosphate. Its pathway is isoprenoid biosynthesis; dimethylallyl diphosphate biosynthesis; dimethylallyl diphosphate from isopentenyl diphosphate: step 1/1. Its function is as follows. Catalyzes the 1,3-allylic rearrangement of the homoallylic substrate isopentenyl (IPP) to its highly electrophilic allylic isomer, dimethylallyl diphosphate (DMAPP). The protein is Isopentenyl-diphosphate Delta-isomerase 1 (Idi1) of Mus musculus (Mouse).